The sequence spans 360 residues: 3-isopropylmalate dehydrogenase (360 aa).

76 to 89 (GPKWDKLDMAIRPE) provides a ligand contact to NAD(+). 4 residues coordinate substrate: R96, R106, R134, and D224. Residues D224, D248, and D252 each contribute to the Mg(2+) site. Residue 282–294 (GSAPDIAGQNMAN) participates in NAD(+) binding.

This sequence belongs to the isocitrate and isopropylmalate dehydrogenases family. LeuB type 1 subfamily. In terms of assembly, homodimer. Requires Mg(2+) as cofactor. It depends on Mn(2+) as a cofactor.

The protein localises to the cytoplasm. The catalysed reaction is (2R,3S)-3-isopropylmalate + NAD(+) = 4-methyl-2-oxopentanoate + CO2 + NADH. Its pathway is amino-acid biosynthesis; L-leucine biosynthesis; L-leucine from 3-methyl-2-oxobutanoate: step 3/4. In terms of biological role, catalyzes the oxidation of 3-carboxy-2-hydroxy-4-methylpentanoate (3-isopropylmalate) to 3-carboxy-4-methyl-2-oxopentanoate. The product decarboxylates to 4-methyl-2 oxopentanoate. In Hahella chejuensis (strain KCTC 2396), this protein is 3-isopropylmalate dehydrogenase.